The following is a 329-amino-acid chain: Probable quinone oxidoreductase (329 aa).

Serine 191 is subject to Phosphoserine.

Belongs to the zinc-containing alcohol dehydrogenase family. Quinone oxidoreductase subfamily.

Its subcellular location is the cytoplasm. It is found in the nucleus. The catalysed reaction is 2 a quinone + NADPH + H(+) = 2 a 1,4-benzosemiquinone + NADP(+). The sequence is that of Probable quinone oxidoreductase (zta1) from Schizosaccharomyces pombe (strain 972 / ATCC 24843) (Fission yeast).